We begin with the raw amino-acid sequence, 443 residues long: Putative type II methyltransferase M.BsuMIIP (443 aa).

The region spanning 4–440 (LRVMSLFSGI…QELIHTYVNK (437 aa)) is the SAM-dependent MTase C5-type domain. C78 is a catalytic residue.

Belongs to the class I-like SAM-binding methyltransferase superfamily. C5-methyltransferase family.

The enzyme catalyses a 2'-deoxycytidine in DNA + S-adenosyl-L-methionine = a 5-methyl-2'-deoxycytidine in DNA + S-adenosyl-L-homocysteine + H(+). Its function is as follows. A putative methylase, recognizes the double-stranded sequence 5'-GGCC-3', methylates C-?. There is no known cognate restriction enzyme. The polypeptide is Putative type II methyltransferase M.BsuMIIP (mtbP) (Bacillus subtilis (strain 168)).